The chain runs to 375 residues: Growth/differentiation factor 8 (375 aa).

Positions 1–18 are cleaved as a signal peptide; the sequence is MQKLQISVYIYLFMLIVA. Positions 19–266 are excised as a propeptide; the sequence is GPVDLNENSE…VTDTPKRSRR (248 aa). 2 N-linked (GlcNAc...) asparagine glycosylation sites follow: asparagine 47 and asparagine 71. Disulfide bonds link cysteine 272–cysteine 282, cysteine 281–cysteine 340, cysteine 309–cysteine 372, and cysteine 313–cysteine 374.

It belongs to the TGF-beta family. Homodimer; disulfide-linked. Interacts with WFIKKN2, leading to inhibit its activity. Interacts with FSTL3. Post-translationally, synthesized as large precursor molecule that undergoes proteolytic cleavage to generate an N-terminal propeptide and a disulfide linked C-terminal dimer, which is the biologically active molecule. The circulating form consists of a latent complex of the C-terminal dimer and other proteins, including its propeptide, which maintain the C-terminal dimer in a latent, inactive state. Ligand activation requires additional cleavage of the prodomain by a tolloid-like metalloproteinase.

The protein resides in the secreted. Its function is as follows. Acts specifically as a negative regulator of skeletal muscle growth. In Bubalus bubalis (Domestic water buffalo), this protein is Growth/differentiation factor 8 (MSTN).